The chain runs to 132 residues: Small ribosomal subunit protein uS11 (132 aa).

The protein belongs to the universal ribosomal protein uS11 family. As to quaternary structure, part of the 30S ribosomal subunit. Interacts with proteins S7 and S18. Binds to IF-3.

Located on the platform of the 30S subunit, it bridges several disparate RNA helices of the 16S rRNA. Forms part of the Shine-Dalgarno cleft in the 70S ribosome. This is Small ribosomal subunit protein uS11 from Chlamydia trachomatis serovar L2 (strain ATCC VR-902B / DSM 19102 / 434/Bu).